The primary structure comprises 291 residues: 4-hydroxy-tetrahydrodipicolinate synthase (291 aa).

Residue Thr-45 coordinates pyruvate. The active-site Proton donor/acceptor is Tyr-133. Lys-161 acts as the Schiff-base intermediate with substrate in catalysis. Ile-203 is a pyruvate binding site.

This sequence belongs to the DapA family. In terms of assembly, homotetramer; dimer of dimers.

It is found in the cytoplasm. It carries out the reaction L-aspartate 4-semialdehyde + pyruvate = (2S,4S)-4-hydroxy-2,3,4,5-tetrahydrodipicolinate + H2O + H(+). Its pathway is amino-acid biosynthesis; L-lysine biosynthesis via DAP pathway; (S)-tetrahydrodipicolinate from L-aspartate: step 3/4. Catalyzes the condensation of (S)-aspartate-beta-semialdehyde [(S)-ASA] and pyruvate to 4-hydroxy-tetrahydrodipicolinate (HTPA). The chain is 4-hydroxy-tetrahydrodipicolinate synthase from Neisseria gonorrhoeae (strain ATCC 700825 / FA 1090).